The sequence spans 134 residues: Small ribosomal subunit protein uS11 (134 aa).

Over residues 113-122 the composition is skewed to polar residues; it reads SSITDATPQP. Positions 113–134 are disordered; that stretch reads SSITDATPQPHNGCRPTKRRKV.

Belongs to the universal ribosomal protein uS11 family. In terms of assembly, part of the 30S ribosomal subunit. Interacts with proteins S7 and S18. Binds to IF-3.

Its function is as follows. Located on the platform of the 30S subunit, it bridges several disparate RNA helices of the 16S rRNA. Forms part of the Shine-Dalgarno cleft in the 70S ribosome. The polypeptide is Small ribosomal subunit protein uS11 (Corynebacterium aurimucosum (strain ATCC 700975 / DSM 44827 / CIP 107346 / CN-1) (Corynebacterium nigricans)).